Reading from the N-terminus, the 87-residue chain is Small ribosomal subunit protein uS17 (87 aa).

Belongs to the universal ribosomal protein uS17 family. Part of the 30S ribosomal subunit.

Its function is as follows. One of the primary rRNA binding proteins, it binds specifically to the 5'-end of 16S ribosomal RNA. The polypeptide is Small ribosomal subunit protein uS17 (Staphylococcus aureus (strain JH1)).